A 131-amino-acid polypeptide reads, in one-letter code: Small ribosomal subunit protein eS17 (131 aa).

The protein belongs to the eukaryotic ribosomal protein eS17 family.

This Drosophila melanogaster (Fruit fly) protein is Small ribosomal subunit protein eS17 (RpS17).